The following is a 360-amino-acid chain: Peptide chain release factor 1 (360 aa).

At Gln235 the chain carries N5-methylglutamine.

The protein belongs to the prokaryotic/mitochondrial release factor family. In terms of processing, methylated by PrmC. Methylation increases the termination efficiency of RF1.

It localises to the cytoplasm. In terms of biological role, peptide chain release factor 1 directs the termination of translation in response to the peptide chain termination codons UAG and UAA. This chain is Peptide chain release factor 1, found in Dechloromonas aromatica (strain RCB).